The chain runs to 184 residues: Glutathione-regulated potassium-efflux system ancillary protein KefG (184 aa).

It belongs to the NAD(P)H dehydrogenase (quinone) family. KefG subfamily. As to quaternary structure, interacts with KefB.

It localises to the cell inner membrane. It catalyses the reaction a quinone + NADH + H(+) = a quinol + NAD(+). The catalysed reaction is a quinone + NADPH + H(+) = a quinol + NADP(+). In terms of biological role, regulatory subunit of a potassium efflux system that confers protection against electrophiles. Required for full activity of KefB. This Shigella dysenteriae serotype 1 (strain Sd197) protein is Glutathione-regulated potassium-efflux system ancillary protein KefG.